The sequence spans 429 residues: Enolase (429 aa).

Gln163 lines the (2R)-2-phosphoglycerate pocket. Glu205 functions as the Proton donor in the catalytic mechanism. The Mg(2+) site is built by Asp242, Glu286, and Asp313. Lys338, Arg367, Ser368, and Lys389 together coordinate (2R)-2-phosphoglycerate. Residue Lys338 is the Proton acceptor of the active site.

The protein belongs to the enolase family. Mg(2+) serves as cofactor.

The protein resides in the cytoplasm. It is found in the secreted. Its subcellular location is the cell surface. It carries out the reaction (2R)-2-phosphoglycerate = phosphoenolpyruvate + H2O. Its pathway is carbohydrate degradation; glycolysis; pyruvate from D-glyceraldehyde 3-phosphate: step 4/5. Its function is as follows. Catalyzes the reversible conversion of 2-phosphoglycerate (2-PG) into phosphoenolpyruvate (PEP). It is essential for the degradation of carbohydrates via glycolysis. The protein is Enolase of Citrifermentans bemidjiense (strain ATCC BAA-1014 / DSM 16622 / JCM 12645 / Bem) (Geobacter bemidjiensis).